Reading from the N-terminus, the 399-residue chain is Stearoyl-[acyl-carrier-protein] 9-desaturase, seed specific, chloroplastic (399 aa).

Residues 1-34 (MALKFNPLVSQPYKLASSARPPVSTFRSPKFLCL) constitute a chloroplast transit peptide. Positions 141, 179, 182, 232, 265, and 268 each coordinate Fe cation.

Belongs to the fatty acid desaturase type 2 family. Homodimer. It depends on Fe(2+) as a cofactor. Developing seeds.

It localises to the plastid. The protein localises to the chloroplast. The enzyme catalyses octadecanoyl-[ACP] + 2 reduced [2Fe-2S]-[ferredoxin] + O2 + 2 H(+) = (9Z)-octadecenoyl-[ACP] + 2 oxidized [2Fe-2S]-[ferredoxin] + 2 H2O. It functions in the pathway lipid metabolism; fatty acid metabolism. Functionally, converts stearoyl-ACP to oleoyl-ACP by introduction of a cis double bond between carbons Delta(9) and Delta(10) of the acyl chain. The sequence is that of Stearoyl-[acyl-carrier-protein] 9-desaturase, seed specific, chloroplastic from Brassica napus (Rape).